The primary structure comprises 372 residues: MKKALITGITGQDGSYLAEFLLEKGYQVHGIKRRSSSFNTSRIDHIYQDPHEVNPHFFLHYGDLTDTSNLIRLVKEIQPDEIYNLGAQSHVAVSFESPEYTADVDAMGTLRLLEAVRINGLEHKTRFYQASTSELYGLVQEIPQRETTPFYPRSPYAVAKMYAYWITVNYRESYGMYACNGILFNHESPRRGETFVTRKITRAIANIALGLEDCLYLGNMDSLRDWGHAKDYVRMQWMMLQQDQPEDFVIATGKQITVREFVRMSAKEAGIEIEFSGKGIDEIATISAISDEYATSAKVGDIIVRVDPRYFRPAEVETLLGDPSKAKEKLGWVPEITVEEMCAEMVAGDLQQAKQHALLKANGFDVSITLES.

Residues 8-13, 63-64, 85-89, and Tyr100 contribute to the NADP(+) site; these read GITGQD, DL, and LGAQS. Thr132 is a catalytic residue. Catalysis depends on nucleophile residues Glu134 and Tyr156. Lys160, His186, and Arg191 together coordinate NADP(+).

This sequence belongs to the NAD(P)-dependent epimerase/dehydratase family. GDP-mannose 4,6-dehydratase subfamily. NADP(+) is required as a cofactor.

The catalysed reaction is GDP-alpha-D-mannose = GDP-4-dehydro-alpha-D-rhamnose + H2O. The protein operates within bacterial outer membrane biogenesis; LPS O-antigen biosynthesis. It functions in the pathway nucleotide-sugar biosynthesis; GDP-L-fucose biosynthesis via de novo pathway; GDP-L-fucose from GDP-alpha-D-mannose: step 1/2. Its function is as follows. Catalyzes the conversion of GDP-D-mannose to GDP-4-dehydro-6-deoxy-D-mannose. This Yersinia enterocolitica serotype O:8 / biotype 1B (strain NCTC 13174 / 8081) protein is GDP-mannose 4,6-dehydratase.